Here is a 498-residue protein sequence, read N- to C-terminus: Glutathione synthetase large chain (498 aa).

Residue Arg128 coordinates substrate. Position 146 (Glu146) interacts with ATP. Positions 146 and 148 each coordinate Mg(2+). Residues 150-153, 233-235, Gln239, and 291-294 contribute to the substrate site; these read ISVS, ERN, and RVGY. An ATP-binding site is contributed by Lys330. Ser356 carries the post-translational modification Phosphoserine. Residues 387 to 396, Tyr398, 420 to 423, and Glu446 each bind ATP; these read KPQREGGGNN and MRYI. Glu391 provides a ligand contact to Mg(2+). A substrate-binding site is contributed by Arg473. ATP-binding residues include Lys475 and Glu481. 484-485 serves as a coordination point for substrate; that stretch reads VA.

This sequence belongs to the eukaryotic GSH synthase family. Heterodimer composed of a large and a small chain. Mg(2+) is required as a cofactor.

It carries out the reaction gamma-L-glutamyl-L-cysteine + glycine + ATP = glutathione + ADP + phosphate + H(+). The protein operates within sulfur metabolism; glutathione biosynthesis; glutathione from L-cysteine and L-glutamate: step 2/2. The polypeptide is Glutathione synthetase large chain (gsa1) (Schizosaccharomyces pombe (strain 972 / ATCC 24843) (Fission yeast)).